The primary structure comprises 864 residues: Leucine--tRNA ligase (864 aa).

Positions 42-52 (PYPSGKLHMGH) match the 'HIGH' region motif. The 'KMSKS' region motif lies at 624–628 (KMSKS). Position 627 (lysine 627) interacts with ATP.

Belongs to the class-I aminoacyl-tRNA synthetase family.

The protein resides in the cytoplasm. The enzyme catalyses tRNA(Leu) + L-leucine + ATP = L-leucyl-tRNA(Leu) + AMP + diphosphate. This is Leucine--tRNA ligase from Burkholderia pseudomallei (strain 1106a).